The chain runs to 122 residues: Large ribosomal subunit protein uL14 (122 aa).

Belongs to the universal ribosomal protein uL14 family. Part of the 50S ribosomal subunit. Forms a cluster with proteins L3 and L19. In the 70S ribosome, L14 and L19 interact and together make contacts with the 16S rRNA in bridges B5 and B8.

In terms of biological role, binds to 23S rRNA. Forms part of two intersubunit bridges in the 70S ribosome. This chain is Large ribosomal subunit protein uL14, found in Campylobacter concisus (strain 13826).